Reading from the N-terminus, the 132-residue chain is MNIIEQLEREEVARLAKTIPDFEPGDTLIVNVRVKEGERTRVQAYEGVCIARSGGGLNESFTVRKISYGEGVERVFPVHSPMIDSIKVARRGKVRRAKLYYLRDRRGKSARIVERTDRYKAKDTPAAAPAAE.

This sequence belongs to the bacterial ribosomal protein bL19 family.

This protein is located at the 30S-50S ribosomal subunit interface and may play a role in the structure and function of the aminoacyl-tRNA binding site. This Methylobacterium radiotolerans (strain ATCC 27329 / DSM 1819 / JCM 2831 / NBRC 15690 / NCIMB 10815 / 0-1) protein is Large ribosomal subunit protein bL19.